The following is a 642-amino-acid chain: 1-deoxy-D-xylulose-5-phosphate synthase 2 (642 aa).

Thiamine diphosphate contacts are provided by residues H73 and 113 to 115; that span reads SHA. Mg(2+) is bound at residue D144. Thiamine diphosphate-binding positions include 145 to 146, N174, Y285, and E366; that span reads GA. N174 serves as a coordination point for Mg(2+).

The protein belongs to the transketolase family. DXPS subfamily. Homodimer. Mg(2+) serves as cofactor. The cofactor is thiamine diphosphate.

It carries out the reaction D-glyceraldehyde 3-phosphate + pyruvate + H(+) = 1-deoxy-D-xylulose 5-phosphate + CO2. It functions in the pathway metabolic intermediate biosynthesis; 1-deoxy-D-xylulose 5-phosphate biosynthesis; 1-deoxy-D-xylulose 5-phosphate from D-glyceraldehyde 3-phosphate and pyruvate: step 1/1. In terms of biological role, catalyzes the acyloin condensation reaction between C atoms 2 and 3 of pyruvate and glyceraldehyde 3-phosphate to yield 1-deoxy-D-xylulose-5-phosphate (DXP). In Streptomyces coelicolor (strain ATCC BAA-471 / A3(2) / M145), this protein is 1-deoxy-D-xylulose-5-phosphate synthase 2.